Here is a 214-residue protein sequence, read N- to C-terminus: ER lumen protein-retaining receptor 3 (214 aa).

The Lumenal segment spans residues 1–4 (MNVF). Residues 5–24 (RISGDVSHLLAIIILLLKMW) traverse the membrane as a helical segment. Residues 25 to 32 (KSKSCAGI) lie on the Cytoplasmic side of the membrane. Residues 33–52 (SGKSQLLFALVFTTRYLDLF) traverse the membrane as a helical segment. An interaction with the K-D-E-L motif on target proteins region spans residues 47–48 (RY). Over 53–58 (TVFISA) the chain is Lumenal. The helical transmembrane segment at 59-79 (YNTVMKIVFLVCAYVTVYLIY) threads the bilayer. Residues 80 to 92 (GKFRKAYDSENDT) lie on the Cytoplasmic side of the membrane. Residues 93–110 (FRLEFLLVPVIGLSFLEN) form a helical membrane-spanning segment. The Lumenal segment spans residues 111 to 116 (YEFTPL). Residues 117–135 (EILWTFSIYLESVAILPQL) form a helical membrane-spanning segment. Topologically, residues 136–149 (FMISKTGEAESITT) are cytoplasmic. Residues 150-168 (HYLFFLGLYRVLYLANWIW) traverse the membrane as a helical segment. Positions 159–169 (RVLYLANWIWR) are interaction with the K-D-E-L motif on target proteins. Over 169 to 178 (RYHTEKFYDQ) the chain is Lumenal. The chain crosses the membrane as a helical span at residues 179–199 (IAVVSGVVQTIFYFDFFYLYI). At 200-214 (TKVLKGKKLSLPMPV) the chain is on the cytoplasmic side. The interval 204–207 (KGKK) is important for recycling of cargo proteins with the sequence motif K-D-E-L from the Golgi to the endoplasmic reticulum.

The protein belongs to the ERD2 family.

It localises to the endoplasmic reticulum membrane. Its subcellular location is the golgi apparatus membrane. The protein localises to the cytoplasmic vesicle. It is found in the COPI-coated vesicle membrane. Its function is as follows. Receptor for the C-terminal sequence motif K-D-E-L that is present on endoplasmic reticulum resident proteins and that mediates their recycling from the Golgi back to the endoplasmic reticulum. The sequence is that of ER lumen protein-retaining receptor 3 (kdelr3) from Xenopus tropicalis (Western clawed frog).